The chain runs to 101 residues: Small ribosomal subunit protein uS14 (101 aa).

Belongs to the universal ribosomal protein uS14 family. Part of the 30S ribosomal subunit. Contacts proteins S3 and S10.

Its function is as follows. Binds 16S rRNA, required for the assembly of 30S particles and may also be responsible for determining the conformation of the 16S rRNA at the A site. The chain is Small ribosomal subunit protein uS14 from Salmonella paratyphi A (strain ATCC 9150 / SARB42).